A 347-amino-acid chain; its full sequence is Quinolinate synthase (347 aa).

Residues His47 and Ser68 each coordinate iminosuccinate. Cys113 is a [4Fe-4S] cluster binding site. Residues 139–141 (YAN) and Ser156 contribute to the iminosuccinate site. Cys200 is a [4Fe-4S] cluster binding site. Iminosuccinate is bound by residues 226-228 (HPE) and Thr243. A [4Fe-4S] cluster-binding site is contributed by Cys297.

The protein belongs to the quinolinate synthase family. Type 1 subfamily. The cofactor is [4Fe-4S] cluster.

The protein resides in the cytoplasm. It catalyses the reaction iminosuccinate + dihydroxyacetone phosphate = quinolinate + phosphate + 2 H2O + H(+). It functions in the pathway cofactor biosynthesis; NAD(+) biosynthesis; quinolinate from iminoaspartate: step 1/1. Catalyzes the condensation of iminoaspartate with dihydroxyacetone phosphate to form quinolinate. The chain is Quinolinate synthase from Salmonella typhi.